The chain runs to 447 residues: GTPase Der (447 aa).

EngA-type G domains are found at residues Pro-3–Glu-167 and Ile-180–Thr-353. GTP contacts are provided by residues Gly-9–Ser-16, Asp-56–Phe-60, Asn-119–Glu-122, Gly-186–Ser-193, Asp-233–Leu-237, and Asn-298–Asp-301. Residues Thr-353–Arg-438 form the KH-like domain.

Belongs to the TRAFAC class TrmE-Era-EngA-EngB-Septin-like GTPase superfamily. EngA (Der) GTPase family. As to quaternary structure, associates with the 50S ribosomal subunit.

Its function is as follows. GTPase that plays an essential role in the late steps of ribosome biogenesis. The chain is GTPase Der from Paracidovorax citrulli (strain AAC00-1) (Acidovorax citrulli).